The chain runs to 368 residues: (Iso)eugenol O-methyltransferase (368 aa).

Positions 1–2 (MG) are excised as a propeptide. S-adenosyl-L-methionine is bound by residues S187, 211–212 (GG), D234, 254–255 (DM), and K268. H272 serves as the catalytic Proton acceptor.

The protein belongs to the class I-like SAM-binding methyltransferase superfamily. Cation-independent O-methyltransferase family. COMT subfamily. In terms of assembly, homodimer. In terms of tissue distribution, expressed in petals, style and stamens, but not in stigma, sepals, leaves or stem tissues.

The catalysed reaction is (E)-isoeugenol + S-adenosyl-L-methionine = (E)-isomethyleugenol + S-adenosyl-L-homocysteine + H(+). Catalyzes the methylation of the para-4-hydroxyl of both eugenol and (iso)eugenol to methyleugenol and isomethyleugenol, respectively. The resulting products are part of a complex mixture of low-molecular-weight volatile compounds emitted by the flowers to attract pollinators. This Clarkia breweri (Fairy fans) protein is (Iso)eugenol O-methyltransferase (IEMT1).